The primary structure comprises 268 residues: Thiazole synthase (268 aa).

Lysine 100 (schiff-base intermediate with DXP) is an active-site residue. 1-deoxy-D-xylulose 5-phosphate is bound by residues glycine 161, 187–188 (AG), and 209–210 (NT). The disordered stretch occupies residues 248–268 (ASPSSPAEGMFTGTQHPAANS). The span at 259–268 (TGTQHPAANS) shows a compositional bias: polar residues.

It belongs to the ThiG family. In terms of assembly, homotetramer. Forms heterodimers with either ThiH or ThiS.

It is found in the cytoplasm. The catalysed reaction is [ThiS sulfur-carrier protein]-C-terminal-Gly-aminoethanethioate + 2-iminoacetate + 1-deoxy-D-xylulose 5-phosphate = [ThiS sulfur-carrier protein]-C-terminal Gly-Gly + 2-[(2R,5Z)-2-carboxy-4-methylthiazol-5(2H)-ylidene]ethyl phosphate + 2 H2O + H(+). It participates in cofactor biosynthesis; thiamine diphosphate biosynthesis. Catalyzes the rearrangement of 1-deoxy-D-xylulose 5-phosphate (DXP) to produce the thiazole phosphate moiety of thiamine. Sulfur is provided by the thiocarboxylate moiety of the carrier protein ThiS. In vitro, sulfur can be provided by H(2)S. In Nitrosomonas europaea (strain ATCC 19718 / CIP 103999 / KCTC 2705 / NBRC 14298), this protein is Thiazole synthase.